The sequence spans 156 residues: Transcriptional repressor NrdR (156 aa).

The segment at 3–34 (CPKCNSTQSKVVDSRHADELNAIRRRRECENC) is a zinc-finger region. One can recognise an ATP-cone domain in the interval 49–139 (LIVVKKDGTR…VYKEFKDVDQ (91 aa)).

The protein belongs to the NrdR family. Zn(2+) serves as cofactor.

In terms of biological role, negatively regulates transcription of bacterial ribonucleotide reductase nrd genes and operons by binding to NrdR-boxes. This Staphylococcus aureus (strain NCTC 8325 / PS 47) protein is Transcriptional repressor NrdR.